The following is a 270-amino-acid chain: Glucosamine-6-phosphate deaminase (270 aa).

Asp72 (proton acceptor; for enolization step) is an active-site residue. Asp141 functions as the For ring-opening step in the catalytic mechanism. Catalysis depends on His143, which acts as the Proton acceptor; for ring-opening step. The active-site For ring-opening step is Glu148.

Belongs to the glucosamine/galactosamine-6-phosphate isomerase family. NagB subfamily. As to quaternary structure, homohexamer.

The enzyme catalyses alpha-D-glucosamine 6-phosphate + H2O = beta-D-fructose 6-phosphate + NH4(+). Its pathway is amino-sugar metabolism; N-acetylneuraminate degradation; D-fructose 6-phosphate from N-acetylneuraminate: step 5/5. Allosterically activated by N-acetylglucosamine 6-phosphate (GlcNAc6P). Catalyzes the reversible isomerization-deamination of glucosamine 6-phosphate (GlcN6P) to form fructose 6-phosphate (Fru6P) and ammonium ion. In Photorhabdus laumondii subsp. laumondii (strain DSM 15139 / CIP 105565 / TT01) (Photorhabdus luminescens subsp. laumondii), this protein is Glucosamine-6-phosphate deaminase.